Consider the following 219-residue polypeptide: Ion-translocating oxidoreductase complex subunit G (219 aa).

The chain crosses the membrane as a helical span at residues 25-45 (GLLLGLFSLVSALMLALASDA). An FMN phosphoryl threonine modification is found at T187.

Belongs to the RnfG family. The complex is composed of six subunits: RnfA, RnfB, RnfC, RnfD, RnfE and RnfG. FMN serves as cofactor.

It is found in the cellular chromatophore membrane. In terms of biological role, part of a membrane-bound complex that couples electron transfer with translocation of ions across the membrane. The protein is Ion-translocating oxidoreductase complex subunit G of Cereibacter sphaeroides (strain ATCC 17023 / DSM 158 / JCM 6121 / CCUG 31486 / LMG 2827 / NBRC 12203 / NCIMB 8253 / ATH 2.4.1.) (Rhodobacter sphaeroides).